The sequence spans 411 residues: Tyrosine--tRNA ligase (411 aa).

Position 34 (tyrosine 34) interacts with L-tyrosine. The 'HIGH' region signature appears at 39-48; the sequence is CTATSLHIGS. 2 residues coordinate L-tyrosine: tyrosine 171 and glutamine 175. The 'KMSKS' region signature appears at 231–235; sequence KMGKT. Residue lysine 234 coordinates ATP. The S4 RNA-binding domain maps to 345-411; sequence ISAYELFHEA…GKKRHILVRV (67 aa).

It belongs to the class-I aminoacyl-tRNA synthetase family. TyrS type 1 subfamily. In terms of assembly, homodimer.

It localises to the cytoplasm. The catalysed reaction is tRNA(Tyr) + L-tyrosine + ATP = L-tyrosyl-tRNA(Tyr) + AMP + diphosphate + H(+). Catalyzes the attachment of tyrosine to tRNA(Tyr) in a two-step reaction: tyrosine is first activated by ATP to form Tyr-AMP and then transferred to the acceptor end of tRNA(Tyr). In Rickettsia felis (strain ATCC VR-1525 / URRWXCal2) (Rickettsia azadi), this protein is Tyrosine--tRNA ligase.